The following is an 830-amino-acid chain: MAIKSLESFLFERGLVGSYAIEALNNCTLDIDVNHYVSRLLTNKREQYLDAIGGFPTSLKMYLESDLKIFKDFNITPIFVFNGGLTYNQLEASGHFTAASASASISSTTTSSSGTNATTRSNTESVLLQRSRGWTQWNNLISSNQNSYIDQPIQPQEPFRHNTTIDSKAYQNDLIAYFIEHGYMYQVAPYSSWFQLAYLLNSAYIDAIYGPTDCLMLDCVDRFILGMEFPNKEFRFIDRSRVMKDLGCTHEEFIDIAMAVGNDLQPTTLPPLQIYPVPQLFDIALEMVLNTGTNFYAYQLSTTLQNDSKENIQNYQRGISALRYMPVLKDTGKVELFVQEIVVSEEDSEKNNKDGKKSNLSSPSSASSSASPATTVTKNASEKLTYEKSSTKEVRKPRDIPNDVHDFIGQMLPHEYYFYRSIGLVTGKLFDAIVTGVYPEEPPLGGGSSTSYKKLVSKSVEIFKNKEINLLTQPINRYYQIKQIKQVKWYAANEPTTLTNRMSPSMFETINHLIVKTETSDEKEFSISEFITTINGSSNMAKDFISEKVIFPNSVPIESKLNSPFNLLSTNFLRLLVLLEFFTFDFKEKLLEPTRWGEVFLKLNELNIDSKYHESVIIFLVFLKCDVLKLDEEVQPPAPSALSQATLRSYPEESLYVLLITRVLTLFQVDQKPSNYHGPIDKKTLIFRDHLSFIKENLNELFEAVLISSLTSGEFNRLSLDNFGWARKIVRYLPFKLDSPNTIMAMMWEFFLQKYLHNGNAKNDALSLVATEFNTYKSTPNLDEQFVESHRFLLEISKVMQELNAAKLIDENVFKLFTKAVEFTTTALSS.

Residue K4 forms a Glycyl lysine isopeptide (Lys-Gly) (interchain with G-Cter in ubiquitin) linkage. The tract at residues 130–380 (RSRGWTQWNN…SPATTVTKNA (251 aa)) is interaction with PBP1. The disordered stretch occupies residues 347–400 (DSEKNNKDGKKSNLSSPSSASSSASPATTVTKNASEKLTYEKSSTKEVRKPRDI). Phosphoserine occurs at positions 358, 362, and 371. A compositionally biased stretch (low complexity) spans 361–373 (SSPSSASSSASPA). The span at 380-400 (ASEKLTYEKSSTKEVRKPRDI) shows a compositional bias: basic and acidic residues.

Belongs to the XPG/RAD2 endonuclease family. In terms of assembly, interacts (via C-terminus) with PBP1 (via C-terminus).

The protein localises to the cytoplasm. It localises to the cytosol. Its function is as follows. Involved in 3'-UTR mediated RNA regulation. Binds to RNA-binding and RNA regulatory proteins. Complexes with PAB1-binding protein to promote mRNA interactions with poly(A)-binding protein. Promotes mating-type switching in mother cells by positively regulating HO expression. This is Post-transcriptional regulator MKT1 (MKT1) from Saccharomyces cerevisiae (strain ATCC 204508 / S288c) (Baker's yeast).